A 197-amino-acid polypeptide reads, in one-letter code: Lactoylglutathione lyase-like protein terB (197 aa).

Positions 1–19 (MARFAVLQLLLPLAAGLTG) are cleaved as a signal peptide. N-linked (GlcNAc...) asparagine glycans are attached at residues Asn82, Asn99, and Asn140.

Belongs to the glyoxalase I family.

In terms of biological role, lactoylglutathione lyase-like protein; part of the gene cluster that mediates the biosynthesis of terrein, a fungal metabolite with ecological, antimicrobial, antiproliferative, and antioxidative activities. The first step in the pathway is performed by the polyketide synthase terA that produces 4-hydroxy-6-methylpyranon (4-HMP), orsellinic acid (OA), and 2,3-dehydro-6-hydroxymellein (2,3-dehydro-6-HM) by condensing acetyl-CoA with two, three, or four malonyl-CoA units, respectively. 4-HMP and OA are not pathway intermediates, but are rather shunt or side products. 2,3-dehydro-6-HM is further converted to 6-hydroxymellein (6-HM) by the 6-hydroxymellein synthase terB. The monooxygenases terC and terD, the multicopper oxidase terE and the Kelch-like protein terF are then involved in the transformation of 6-HM to terrein. Even if they are co-regulated with the other terrein cluster genes, terH and terI seem to be dispensable for terrein production; whereas one or both of the 2 transporters terG and terJ are probably required for efficient secretion of metabolites. This chain is Lactoylglutathione lyase-like protein terB, found in Aspergillus terreus (strain NIH 2624 / FGSC A1156).